The sequence spans 170 residues: UPF0251 protein MA_1017 (170 aa).

It belongs to the UPF0251 family.

The chain is UPF0251 protein MA_1017 from Methanosarcina acetivorans (strain ATCC 35395 / DSM 2834 / JCM 12185 / C2A).